A 107-amino-acid polypeptide reads, in one-letter code: Nucleoid-associated protein AZOSEA06390 (107 aa).

This sequence belongs to the YbaB/EbfC family. In terms of assembly, homodimer.

It is found in the cytoplasm. Its subcellular location is the nucleoid. Its function is as follows. Binds to DNA and alters its conformation. May be involved in regulation of gene expression, nucleoid organization and DNA protection. In Aromatoleum aromaticum (strain DSM 19018 / LMG 30748 / EbN1) (Azoarcus sp. (strain EbN1)), this protein is Nucleoid-associated protein AZOSEA06390.